The chain runs to 281 residues: Endonuclease III-like protein 1 (281 aa).

A mitochondrion-targeting transit peptide spans M1–G17. Residues M1 to N60 are disordered. Residues R15–R24 show a composition bias toward low complexity. The HhH domain maps to K168–H192. K189 functions as the Nucleophile; for N-glycosylase activity in the catalytic mechanism. The [4Fe-4S] cluster site is built by C259, C266, C269, and C275.

This sequence belongs to the Nth/MutY family. The cofactor is [4Fe-4S] cluster.

It localises to the nucleus. The protein resides in the mitochondrion. It catalyses the reaction 2'-deoxyribonucleotide-(2'-deoxyribose 5'-phosphate)-2'-deoxyribonucleotide-DNA = a 3'-end 2'-deoxyribonucleotide-(2,3-dehydro-2,3-deoxyribose 5'-phosphate)-DNA + a 5'-end 5'-phospho-2'-deoxyribonucleoside-DNA + H(+). In terms of biological role, bifunctional DNA N-glycosylase with associated apurinic/apyrimidinic (AP) lyase function that catalyzes the first step in base excision repair (BER), the primary repair pathway for the repair of oxidative DNA damage. The DNA N-glycosylase activity releases the damaged DNA base from DNA by cleaving the N-glycosidic bond, leaving an AP site. The AP lyase activity cleaves the phosphodiester bond 3' to the AP site by a beta-elimination. Primarily recognizes and repairs oxidative base damage of pyrimidines. In Gallus gallus (Chicken), this protein is Endonuclease III-like protein 1.